The following is a 446-amino-acid chain: MINKIVKNVIENQFKGYNKLKDLPISLFVYWPYCSKICPYCNFNKYRDSDKVDHERMSKSLSRELESFVKNIYLNSNENSFIRERPITSIYFGGGTPSLAKISTFVETIETMKKLFPSSLSIEDIEITLEVNPDQKDLKNLLKDFKKYVGVNRVSLGVQSLVDKDLHFLGRTHNRIQAEESIKIARDLFDHVTFDLIYSRTIDQTLEQWRNELRYALNLADGNGHVSLYTLTFEQGTSFYRRLSSKGNKFKIIPPDDQKSSDLYDLTVCEAEAMGFQQYEISSFASSHNQKGKHNLNYWRSGDFIGIGPGASSRLTTLNNNNNNNNQISRYSFKNILHPKEWMEKLNSKEILCNAFIEDEFNPTIPLTNFEVAEEMLLNGLRTIEGVQLSTFTFQTNGLTFDQFLNMKQVEILQEQGFLILEPTCLKLTGNGRKLLDTIIPKILKY.

Positions 15–277 (KGYNKLKDLP…VCEAEAMGFQ (263 aa)) constitute a Radical SAM core domain. 3 residues coordinate [4Fe-4S] cluster: Cys-34, Cys-38, and Cys-41. S-adenosyl-L-methionine contacts are provided by residues Gly-94, 95–96 (GT), Glu-130, Gln-159, Arg-171, and Asp-195.

It belongs to the anaerobic coproporphyrinogen-III oxidase family. HemW subfamily.

The protein resides in the mitochondrion. May be a heme chaperone, appears to bind heme. Homologous bacterial proteins do not have oxygen-independent coproporphyrinogen-III oxidase activity. Binds 1 [4Fe-4S] cluster. The cluster is coordinated with 3 cysteines and an exchangeable S-adenosyl-L-methionine. This Dictyostelium discoideum (Social amoeba) protein is Radical S-adenosyl methionine domain-containing protein 1, mitochondrial (rsad1).